The sequence spans 168 residues: Large ribosomal subunit protein uL10 (168 aa).

The protein belongs to the universal ribosomal protein uL10 family. Part of the ribosomal stalk of the 50S ribosomal subunit. The N-terminus interacts with L11 and the large rRNA to form the base of the stalk. The C-terminus forms an elongated spine to which L12 dimers bind in a sequential fashion forming a multimeric L10(L12)X complex.

Its function is as follows. Forms part of the ribosomal stalk, playing a central role in the interaction of the ribosome with GTP-bound translation factors. The polypeptide is Large ribosomal subunit protein uL10 (Pediococcus pentosaceus (strain ATCC 25745 / CCUG 21536 / LMG 10740 / 183-1w)).